A 1962-amino-acid chain; its full sequence is Sodium channel protein type 10 subunit alpha (1962 aa).

At 1–125 the chain is on the cytoplasmic side; sequence MEFPFGSLET…FNLIRRTAIK (125 aa). A disordered region spans residues 32–56; that stretch reads QAAKKAKGKHREQKDQEEKPRPQLD. The segment covering 33 to 42 has biased composition (basic residues); sequence AAKKAKGKHR. The segment covering 43-55 has biased composition (basic and acidic residues); the sequence is EQKDQEEKPRPQL. An I repeat occupies 116–414; sequence FNLIRRTAIK…VTMAYEEQNQ (299 aa). The helical transmembrane segment at 126 to 149 threads the bilayer; sequence VSVHSWFSLFITVTILVNCVGMTQ. Over 150-154 the chain is Extracellular; it reads TELPD. Residues 155-174 form a helical membrane-spanning segment; that stretch reads RIEYVFTVIYTFEALIKILA. The Cytoplasmic portion of the chain corresponds to 175–187; that stretch reads RGFCLNEFAYLRD. A helical membrane pass occupies residues 188-206; that stretch reads PWDWLDFSVITLAYIGEAT. The Extracellular segment spans residues 207 to 212; the sequence is ALRGIS. The helical; Voltage-sensor transmembrane segment at 213 to 232 threads the bilayer; that stretch reads GLRTFRVLRALKTVSVIPGL. The Cytoplasmic portion of the chain corresponds to 233–248; it reads KVIVGALIHSVRKLAD. A helical membrane pass occupies residues 249–272; sequence VTILTVFCLSVFALVGLQLFKGNL. Over 273–350 the chain is Extracellular; the sequence is KNKCVKNCAA…PDFNYTSFDS (78 aa). Cysteines 276 and 328 form a disulfide. N-linked (GlcNAc...) asparagine glycosylation is found at N284, N288, N321, and N344. An intramembrane region (pore-forming) is located at residues 351–375; the sequence is FAWAFLSLFRLMTQDSWERLYQQTL. At 376-382 the chain is on the extracellular side; it reads RASGKMY. The helical transmembrane segment at 383-408 threads the bilayer; sequence MVFFVLVIFLGSFYLVNLILAVVTMA. Topologically, residues 409–668 are cytoplasmic; the sequence is YEEQNQATID…TWVKLKTVLF (260 aa). Residues S450, S453, S476, and S488 each carry the phosphoserine modification. Polar residues predominate over residues 452 to 463; sequence HSCNGSPLPSKN. Disordered regions lie at residues 452–493 and 521–586; these read HSCN…PYNQ and LDTS…TGEL. Phosphoserine is present on residues S621 and S624. An II repeat occupies 656 to 920; that stretch reads CCPTWVKLKT…DEDGEVNNLQ (265 aa). A helical transmembrane segment spans residues 669-693; that stretch reads GIVTDPFAELTTTLCIVVNTVFMAM. Over 694–704 the chain is Extracellular; that stretch reads EHHGMSSAFEA. A helical membrane pass occupies residues 705–728; it reads MLQIGNIVFTVFFTAEMVFKIIAF. The Cytoplasmic segment spans residues 729-736; it reads DPYYYFQK. Residues 737-756 traverse the membrane as a helical segment; the sequence is RWNIFDCIIVTVSLIELGAA. The Extracellular segment spans residues 757–762; that stretch reads RKGSLS. Residues 763–782 traverse the membrane as a helical; Voltage-sensor segment; that stretch reads VLRTFRLLRVFKLAKSWPTL. The Cytoplasmic segment spans residues 783–798; the sequence is NTLIKIIGNSVGALGN. Residues 799–819 traverse the membrane as a helical segment; that stretch reads LTIILAIIVFVFALVGKQLLG. Over 820–843 the chain is Extracellular; it reads ENYRDNRRNISAPNEEWPRWHMHD. A glycan (N-linked (GlcNAc...) asparagine) is linked at N828. Positions 844–864 form an intramembrane region, pore-forming; it reads FFHSFLIVFRILCGEWIENMW. Topologically, residues 865–873 are extracellular; it reads ACMEVGQKS. A disulfide bridge connects residues C866 and C875. Residues 874-899 traverse the membrane as a helical segment; that stretch reads ICLILFLTVMVLGNLVVLNLFTALLL. The Cytoplasmic portion of the chain corresponds to 900–1154; sequence NSFSADNLAT…GWQVRKTCYR (255 aa). The span at 1015 to 1026 shows a compositional bias: acidic residues; it reads LDDLEEDGEEDS. Residues 1015–1035 are disordered; it reads LDDLEEDGEEDSQSSQQEVIL. The III repeat unit spans residues 1147-1456; the sequence is QVRKTCYRIV…KKYYNAMKKL (310 aa). A helical transmembrane segment spans residues 1155-1178; that stretch reads IVEHSWFESFIIFMILLSSGSLAF. The Extracellular segment spans residues 1179–1191; it reads EDYHLDQKPTVKA. The helical transmembrane segment at 1192-1217 threads the bilayer; it reads LLEYTDRMFTFIFVLEMLLKWVAYGF. Topologically, residues 1218–1223 are cytoplasmic; sequence KKYFTN. The helical transmembrane segment at 1224–1245 threads the bilayer; sequence AWCWLDFLIVNISLISLIAKIL. Residues 1246-1249 are Extracellular-facing; that stretch reads QYSD. Residues 1250–1271 form a helical; Voltage-sensor membrane-spanning segment; it reads VASIKALRTLRALRPLRALSRF. Over 1272 to 1290 the chain is Cytoplasmic; that stretch reads EGMRVVVDALVGAIPSIMN. The helical transmembrane segment at 1291–1318 threads the bilayer; that stretch reads VLLVCLIFWLIFSTMGVNFFAGKFGRCI. 3 N-linked (GlcNAc...) asparagine glycosylation sites follow: N1319, N1335, and N1343. Residues 1319–1360 are Extracellular-facing; the sequence is NKTNEYFSLVPLSIVNNISDCKYQNHTGSFFWVNVKVNFDNV. The segment at residues 1361–1382 is an intramembrane region (pore-forming); it reads AMGYLALLQVATFKGWMDIMYA. The Extracellular portion of the chain corresponds to 1383–1398; the sequence is AVDARDVNLQPKWEDN. A helical transmembrane segment spans residues 1399–1425; sequence VYMYLYFVIFIIFGGFFTLNLFVGVII. Over 1426–1478 the chain is Cytoplasmic; that stretch reads DNFNQQKKKLGGQDIFMTEEQKKYYNAMKKLGSKKPQKPIPRPLNKYQGFVFD. S1458 carries the phosphoserine; by PKC modification. One copy of the IV repeat lies at 1465 to 1764; sequence IPRPLNKYQG…WEKFDPEATQ (300 aa). A helical membrane pass occupies residues 1479 to 1502; that stretch reads IVTKQAFDIVIMVLICLNMITMMV. Residues 1503-1513 lie on the Extracellular side of the membrane; the sequence is ETDEQSAEKTK. A helical membrane pass occupies residues 1514 to 1537; sequence ILNKINQFFVAVFTGECVMKMFAL. The Cytoplasmic portion of the chain corresponds to 1538–1543; it reads RHYYFT. Residues 1544-1567 traverse the membrane as a helical segment; the sequence is NGWNVFDFIVVVLSIGSLVFSVIL. The Extracellular portion of the chain corresponds to 1568-1579; it reads TSLENYFSPTLF. The chain crosses the membrane as a helical; Voltage-sensor span at residues 1580 to 1601; the sequence is RVIRLARIGRILRLIRAAKGIR. Over 1602–1616 the chain is Cytoplasmic; sequence TLLFALMMSLPALFN. A helical transmembrane segment spans residues 1617–1639; that stretch reads IGLLLFLVMFIYSIFGMASFPHV. Residues 1640–1653 lie on the Extracellular side of the membrane; that stretch reads SWEAGIDDMFNFQT. The pore-forming intramembrane region spans 1654–1676; that stretch reads FANSMLCLFQITTSAGWDGLLSP. The Extracellular portion of the chain corresponds to 1677–1704; sequence ILNTGPPYCDPNLPNSNGSRGNCGSPAV. The N-linked (GlcNAc...) asparagine glycan is linked to N1693. Residues 1705-1729 traverse the membrane as a helical segment; it reads GILFFTTYIIISFLIVVNMYIAVIL. The Cytoplasmic segment spans residues 1730–1962; sequence ENFNVATQES…TSKKVTAPGP (233 aa). Residues 1858–1887 enclose the IQ domain; that stretch reads EDISATVIQKAYRSYVLHRSMTISNPPAVP. The tract at residues 1914 to 1962 is disordered; the sequence is KSETASAASFPPSYDSVTRGLSDQINMSTSSSMQNEDEGTSKKVTAPGP. Positions 1928 to 1947 are enriched in polar residues; that stretch reads DSVTRGLSDQINMSTSSSMQ.

Belongs to the sodium channel (TC 1.A.1.10) family. Nav1.8/SCN10A subfamily. In terms of assembly, the channel consists of an ion conducting pore forming alpha-subunit regulated by one or more associated auxiliary subunits SCN1B, SCN2B and SCN3B; electrophysiological properties may vary depending on the type of the associated beta subunits. Found in a number of complexes with PRX, DYNLT1 and PDZD2. Interacts with proteins such as FSTL1, PRX, DYNLT1, PDZD2, S100A10 and many others. Interacts with NEDD4 and NEDD4L. Ubiquitinated by NEDD4L; which promotes its endocytosis. In terms of processing, phosphorylation at Ser-1458 by PKC in a highly conserved cytoplasmic loop slows inactivation of the sodium channel and reduces peak sodium currents. Post-translationally, lacks the cysteine which covalently binds the conotoxin GVIIJ. This cysteine (position 825) is speculated in other sodium channel subunits alpha to be implied in covalent binding with the sodium channel subunit beta-2 or beta-4. Expressed in nodose ganglia, but not in cortex, hippocampus, cerebellum, liver, heart and skeletal muscle.

Its subcellular location is the cell membrane. It carries out the reaction Na(+)(in) = Na(+)(out). Its function is as follows. Tetrodotoxin-resistant channel that mediates the voltage-dependent sodium ion permeability of excitable membranes. Assuming opened or closed conformations in response to the voltage difference across the membrane, the protein forms a sodium-selective channel through which sodium ions may pass in accordance with their electrochemical gradient. Plays a role in neuropathic pain mechanisms. In Canis lupus familiaris (Dog), this protein is Sodium channel protein type 10 subunit alpha (SCN10A).